The following is a 360-amino-acid chain: Phospho-N-acetylmuramoyl-pentapeptide-transferase (360 aa).

10 helical membrane passes run 16-36 (FAVFQYLTLRGILGVLTALVL), 73-93 (TMGGALILSSIGVSTLLWADL), 97-117 (YVWVVLLVTLLFGAIGWVDDY), 134-154 (YFWQSVFGLGAAIFLYMTAST), 168-188 (YSIPLGAGFIVLTYFVIVGSS), 199-219 (GLAIMPTVMVGGGLGIFCYLS), 236-256 (AGELIVFCGALIGAGLGFLWF), 263-283 (VFMGDVGALALGAALGTIAVI), 288-308 (IVLFIMGGVFVMETLSVVIQV), and 338-358 (VIVRFWIITVILVLIGLATLK).

This sequence belongs to the glycosyltransferase 4 family. MraY subfamily. It depends on Mg(2+) as a cofactor.

Its subcellular location is the cell inner membrane. It carries out the reaction UDP-N-acetyl-alpha-D-muramoyl-L-alanyl-gamma-D-glutamyl-meso-2,6-diaminopimeloyl-D-alanyl-D-alanine + di-trans,octa-cis-undecaprenyl phosphate = di-trans,octa-cis-undecaprenyl diphospho-N-acetyl-alpha-D-muramoyl-L-alanyl-D-glutamyl-meso-2,6-diaminopimeloyl-D-alanyl-D-alanine + UMP. Its pathway is cell wall biogenesis; peptidoglycan biosynthesis. Its function is as follows. Catalyzes the initial step of the lipid cycle reactions in the biosynthesis of the cell wall peptidoglycan: transfers peptidoglycan precursor phospho-MurNAc-pentapeptide from UDP-MurNAc-pentapeptide onto the lipid carrier undecaprenyl phosphate, yielding undecaprenyl-pyrophosphoryl-MurNAc-pentapeptide, known as lipid I. The polypeptide is Phospho-N-acetylmuramoyl-pentapeptide-transferase (Pseudomonas fluorescens (strain Pf0-1)).